Consider the following 291-residue polypeptide: BTB/POZ domain-containing protein 19 (291 aa).

A BTB domain is found at 29–98 (SDVRFVVGQE…LYTNSAKLQR (70 aa)). The 101-residue stretch at 134 to 234 (CEALQVAVTF…LALLAPAELS (101 aa)) folds into the BACK domain.

The sequence is that of BTB/POZ domain-containing protein 19 (BTBD19) from Bos taurus (Bovine).